The following is a 122-amino-acid chain: Large ribosomal subunit protein uL14c (122 aa).

It belongs to the universal ribosomal protein uL14 family. Part of the 50S ribosomal subunit.

It is found in the plastid. Its subcellular location is the chloroplast. Binds to 23S rRNA. In Acorus calamus (Sweet flag), this protein is Large ribosomal subunit protein uL14c.